A 781-amino-acid polypeptide reads, in one-letter code: DEAD-box ATP-dependent RNA helicase 50 (781 aa).

Disordered stretches follow at residues 72–103, 117–148, 166–240, 254–292, and 313–342; these read EFAP…LTAS, GKVT…DEGF, IPRS…KGDR, GRAI…REDR, and YNPR…RGWG. The segment covering 79-88 has biased composition (low complexity); that stretch reads SDLLSSIPSE. Residues 130–143 are compositionally biased toward acidic residues; that stretch reads EEEDEDDASDENYS. The segment covering 171–197 has biased composition (basic and acidic residues); sequence KSAERNEVKRASKVRESRESRRDLDRL. The span at 198-208 shows a compositional bias: acidic residues; the sequence is EGDDEDVDEVS. Residues 216–226 show a composition bias toward polar residues; sequence NQRAGSRSSYS. The segment covering 254–274 has biased composition (basic and acidic residues); it reads GRAIDEVSNPRKFNDNERAES. The segment covering 275-286 has biased composition (low complexity); it reads RSSYSRDSSANS. The span at 313 to 325 shows a compositional bias: basic and acidic residues; sequence YNPRRFTDNERGL. Positions 374–402 match the Q motif motif; the sequence is KTFAEIGCSEDMMKALKEQNFDRPAHIQA. Positions 405-586 constitute a Helicase ATP-binding domain; the sequence is FSPVIDGKSC…VEVFPDCEVV (182 aa). Residue 418-425 participates in ATP binding; sequence DQSGSGKT. Positions 533–536 match the DEAD box motif; sequence DEVD. One can recognise a Helicase C-terminal domain in the interval 621-781; the sequence is NKKTALLQIM…DVPNAYEFTT (161 aa).

This sequence belongs to the DEAD box helicase family.

The enzyme catalyses ATP + H2O = ADP + phosphate + H(+). Probably involved in resistance to biotic and abiotic stresses. This is DEAD-box ATP-dependent RNA helicase 50 (RH50) from Arabidopsis thaliana (Mouse-ear cress).